Consider the following 201-residue polypeptide: UPF0301 protein Arad_1256 (201 aa).

Belongs to the UPF0301 (AlgH) family.

This is UPF0301 protein Arad_1256 from Rhizobium rhizogenes (strain K84 / ATCC BAA-868) (Agrobacterium radiobacter).